We begin with the raw amino-acid sequence, 375 residues long: Growth/differentiation factor 8 (375 aa).

A signal peptide spans 1-18 (MQKLQIFVYIYLFMLLVA). A propeptide spanning residues 19-266 (GPVDLNENSE…VTDTPKRSRR (248 aa)) is cleaved from the precursor. N-linked (GlcNAc...) asparagine glycosylation is found at Asn48 and Asn71. 4 disulfides stabilise this stretch: Cys272–Cys282, Cys281–Cys340, Cys309–Cys372, and Cys313–Cys374.

Belongs to the TGF-beta family. As to quaternary structure, homodimer; disulfide-linked. Interacts with WFIKKN2, leading to inhibit its activity. Interacts with FSTL3. In terms of processing, synthesized as large precursor molecule that undergoes proteolytic cleavage to generate an N-terminal propeptide and a disulfide linked C-terminal dimer, which is the biologically active molecule. The circulating form consists of a latent complex of the C-terminal dimer and other proteins, including its propeptide, which maintain the C-terminal dimer in a latent, inactive state. Ligand activation requires additional cleavage of the prodomain by a tolloid-like metalloproteinase.

The protein resides in the secreted. In terms of biological role, acts specifically as a negative regulator of skeletal muscle growth. This Capra ibex (Ibex) protein is Growth/differentiation factor 8 (MSTN).